Reading from the N-terminus, the 208-residue chain is Phosphoheptose isomerase (208 aa).

Residues 38–200 form the SIS domain; it reads MAVTLAKGHK…LFENVLALQP (163 aa). 53 to 55 is a substrate binding site; the sequence is NGG. Zn(2+) is bound by residues His62 and Glu66. Residues Glu66, 95-96, 121-123, Ser126, and Gln173 contribute to the substrate site; these read ND and STS. Residues Gln173 and His181 each coordinate Zn(2+).

The protein belongs to the SIS family. GmhA subfamily. In terms of assembly, homotetramer. Requires Zn(2+) as cofactor.

Its subcellular location is the cytoplasm. It catalyses the reaction 2 D-sedoheptulose 7-phosphate = D-glycero-alpha-D-manno-heptose 7-phosphate + D-glycero-beta-D-manno-heptose 7-phosphate. It functions in the pathway carbohydrate biosynthesis; D-glycero-D-manno-heptose 7-phosphate biosynthesis; D-glycero-alpha-D-manno-heptose 7-phosphate and D-glycero-beta-D-manno-heptose 7-phosphate from sedoheptulose 7-phosphate: step 1/1. Its function is as follows. Catalyzes the isomerization of sedoheptulose 7-phosphate in D-glycero-D-manno-heptose 7-phosphate. The protein is Phosphoheptose isomerase of Nitratidesulfovibrio vulgaris (strain ATCC 29579 / DSM 644 / CCUG 34227 / NCIMB 8303 / VKM B-1760 / Hildenborough) (Desulfovibrio vulgaris).